Reading from the N-terminus, the 185-residue chain is Ribosome-recycling factor (185 aa).

Belongs to the RRF family.

It is found in the cytoplasm. Its function is as follows. Responsible for the release of ribosomes from messenger RNA at the termination of protein biosynthesis. May increase the efficiency of translation by recycling ribosomes from one round of translation to another. This Shewanella halifaxensis (strain HAW-EB4) protein is Ribosome-recycling factor.